The chain runs to 484 residues: E-selectin (484 aa).

An N-terminal signal peptide occupies residues 1–22 (MIASQFLSALPLVLLLLRESGA). Residues 23 to 140 (WSYSASTETM…CSKKKLALCY (118 aa)) form the C-type lectin domain. The Extracellular portion of the chain corresponds to 23 to 429 (WSYSASTETM…CEAPAESKIP (407 aa)). Cystine bridges form between Cys41-Cys139, Cys112-Cys131, Cys144-Cys155, Cys149-Cys164, Cys166-Cys175, Cys181-Cys222, Cys194-Cys204, Cys208-Cys235, Cys240-Cys285, Cys271-Cys298, Cys303-Cys348, Cys334-Cys361, Cys366-Cys407, and Cys393-Cys420. Residues Asn61, Asn65, and Asn79 are each glycosylated (N-linked (GlcNAc...) asparagine). Ca(2+)-binding residues include Glu102, Asn104, and Glu110. Residues 102-110 (EPNNKQSNE), 114-119 (EIYIKR), and 127-129 (NDE) each bind a carbohydrate. Ca(2+) contacts are provided by Asn127 and Asp128. An EGF-like domain is found at 141–176 (TAACTPTSCSGHGECIETINSSTCQCYPGFRGLQCE). N-linked (GlcNAc...) asparagine glycosylation occurs at Asn160. 4 consecutive Sushi domains span residues 179 to 237 (VECD…TCKA), 251 to 300 (VSCN…VCKA), 301 to 363 (VKCP…SCQV), and 364 to 422 (VQCS…TCEA). Asn201 is a glycosylation site (N-linked (GlcNAc...) asparagine). Asn254 carries an N-linked (GlcNAc...) asparagine glycan. Residues Asn376 and Asn400 are each glycosylated (N-linked (GlcNAc...) asparagine). The helical transmembrane segment at 430 to 451 (LAMGLAAGGVSFMTSASFLLWL) threads the bilayer. Topologically, residues 452-484 (LKRLRKRAKKFVPSSSSECLQPNGSYQMPSDLI) are cytoplasmic.

The protein belongs to the selectin/LECAM family. Interacts with SELPLG/PSGL1 and PODXL2 through the sialyl Lewis X epitope. SELPLG sulfation appears not to be required for this interaction.

It is found in the cell membrane. Its function is as follows. Cell-surface glycoprotein having a role in immunoadhesion. Mediates in the adhesion of blood neutrophils in cytokine-activated endothelium through interaction with SELPLG/PSGL1. May have a role in capillary morphogenesis. The polypeptide is E-selectin (SELE) (Sus scrofa (Pig)).